The chain runs to 2571 residues: Stabilin-1 (2571 aa).

The first 25 residues, 1 to 25, serve as a signal peptide directing secretion; the sequence is MAEPRTLLLLCVLVLCLSDSSFIRG. The Extracellular segment spans residues 26-2475; sequence QTVRSKRCDI…RAVLGSEPPP (2450 aa). EGF-like domains follow at residues 111–149, 157–194, 196–232, and 233–272; these read FECP…SVCQ, FGPD…PHCD, ELPV…NVCL, and APDP…KVCL. 12 cysteine pairs are disulfide-bonded: Cys-113-Cys-127, Cys-121-Cys-137, Cys-139-Cys-148, Cys-161-Cys-172, Cys-165-Cys-182, Cys-184-Cys-193, Cys-200-Cys-211, Cys-205-Cys-218, Cys-220-Cys-231, Cys-237-Cys-248, Cys-242-Cys-258, and Cys-260-Cys-271. N-linked (GlcNAc...) asparagine glycosylation is found at Asn-134 and Asn-142. 7 N-linked (GlcNAc...) asparagine glycosylation sites follow: Asn-287, Asn-313, Asn-416, Asn-607, Asn-674, Asn-713, and Asn-746. FAS1 domains follow at residues 357–495 and 507–642; these read YGHL…TALR and KKTV…EGIL. The 41-residue stretch at 729 to 769 folds into the EGF-like 5 domain; sequence DCTQCPGGFSNPCYGKGNCSDGVRGNGACLCFPDYKGIACH. Intrachain disulfides connect Cys-733–Cys-747, Cys-741–Cys-757, and Cys-759–Cys-768. A glycan (N-linked (GlcNAc...) asparagine) is linked at Asn-817. EGF-like domains are found at residues 819–859, 862–904, 905–947, and 948–987; these read SMGN…NGFS, RSNP…RICV, AIDE…YECS, and PIDP…DGFS. Disulfide bonds link Cys-823-Cys-838, Cys-832-Cys-847, Cys-866-Cys-880, Cys-874-Cys-890, Cys-892-Cys-903, Cys-909-Cys-923, Cys-917-Cys-933, Cys-935-Cys-946, Cys-952-Cys-965, and Cys-959-Cys-975. FAS1 domains are found at residues 989 to 1119 and 1129 to 1254; these read YGDI…SQVL and GPGL…SGIL. 7 N-linked (GlcNAc...) asparagine glycosylation sites follow: Asn-1011, Asn-1088, Asn-1097, Asn-1171, Asn-1179, Asn-1223, and Asn-1275. The Laminin EGF-like 1 domain occupies 1328–1393; it reads TLCEPCPGGL…CDCDHGLCQE (66 aa). 18 cysteine pairs are disulfide-bonded: Cys-1333/Cys-1347, Cys-1341/Cys-1357, Cys-1359/Cys-1368, Cys-1380/Cys-1391, Cys-1384/Cys-1401, Cys-1403/Cys-1412, Cys-1421/Cys-1431, Cys-1425/Cys-1441, Cys-1443/Cys-1454, Cys-1460/Cys-1473, Cys-1467/Cys-1483, Cys-1485/Cys-1496, Cys-1502/Cys-1515, Cys-1509/Cys-1525, Cys-1527/Cys-1539, Cys-1545/Cys-1558, Cys-1552/Cys-1568, and Cys-1570/Cys-1582. Asn-1398 carries an N-linked (GlcNAc...) asparagine glycan. 4 consecutive EGF-like domains span residues 1417–1455, 1456–1497, 1498–1540, and 1541–1583; these read TDHQ…SYCS, EVDP…ELCQ, EINS…QTCK, and LLDP…ITCH. Asn-1450 and Asn-1472 each carry an N-linked (GlcNAc...) asparagine glycan. FAS1 domains are found at residues 1583 to 1709 and 1725 to 1865; these read HGRV…DHVL and PQRN…DQLL. 2 N-linked (GlcNAc...) asparagine glycosylation sites follow: Asn-1627 and Asn-1728. One can recognise a Laminin EGF-like 2 domain in the interval 1966–2031; that stretch reads INCHACPGGP…RCTQHGRCDE (66 aa). Cystine bridges form between Cys-1971/Cys-1985, Cys-1979/Cys-1995, Cys-1997/Cys-2006, Cys-2018/Cys-2029, Cys-2023/Cys-2039, Cys-2041/Cys-2050, Cys-2060/Cys-2070, Cys-2064/Cys-2076, Cys-2078/Cys-2089, Cys-2095/Cys-2108, Cys-2102/Cys-2117, Cys-2119/Cys-2130, Cys-2136/Cys-2150, Cys-2144/Cys-2160, Cys-2162/Cys-2173, Cys-2230/Cys-2299, and Cys-2254/Cys-2275. EGF-like domains follow at residues 2056–2090, 2091–2131, and 2132–2174; these read LQPV…RVCT, VADL…WSCR, and ARDP…LQCL. Residue Asn-2107 is glycosylated (N-linked (GlcNAc...) asparagine). One can recognise a Link domain in the interval 2208–2301; the sequence is GVFHIQATSG…SELWDAYCYR (94 aa). Residues Asn-2261, Asn-2290, Asn-2334, Asn-2347, Asn-2379, Asn-2393, Asn-2400, and Asn-2424 are each glycosylated (N-linked (GlcNAc...) asparagine). One can recognise an FAS1 7 domain in the interval 2322–2459; it reads NGKLLDVLAA…GIIHALASPL (138 aa). Residues 2476–2496 traverse the membrane as a helical segment; that stretch reads VALSLGVVVTSGTLLGLVAGA. The Cytoplasmic segment spans residues 2497-2571; it reads LYLRARGKPP…PDTQRVLKVK (75 aa).

Interacts with CHID1.

The protein resides in the membrane. Functionally, acts as a scavenger receptor for acetylated low density lipoprotein. Binds to both Gram-positive and Gram-negative bacteria and may play a role in defense against bacterial infection. When inhibited in endothelial tube formation assays, there is a marked decrease in cell-cell interactions, suggesting a role in angiogenesis. Involved in the delivery of newly synthesized CHID1/SI-CLP from the biosynthetic compartment to the endosomal/lysosomal system. This is Stabilin-1 (Stab1) from Mus musculus (Mouse).